We begin with the raw amino-acid sequence, 692 residues long: Ribonuclease J (692 aa).

The disordered stretch occupies residues 1–91; sequence MTDNNQNNEN…RNYAKEELDN (91 aa). The segment covering 9 to 25 has biased composition (basic and acidic residues); that stretch reads ENHENSSENSKDHHEAR. The span at 57 to 79 shows a compositional bias: basic residues; that stretch reads HHKKEHRPNKKPNNHHKPKHASQ. An N6-acetyllysine mark is found at Lys-135 and Lys-141. Zn(2+)-binding residues include His-209, His-211, Asp-213, His-214, His-278, and Asp-300. Residues Lys-324, Lys-338, and Lys-398 each carry the N6-acetyllysine modification. 501 to 505 contacts substrate; that stretch reads HVSGH. Lys-512 carries the N6-acetyllysine modification. His-527 serves as a coordination point for Zn(2+). Residues Lys-548, Lys-635, and Lys-650 each carry the N6-acetyllysine modification.

Belongs to the metallo-beta-lactamase superfamily. RNA-metabolizing metallo-beta-lactamase-like family. Bacterial RNase J subfamily. Homodimer. Homotetramer; dimer of homodimers. Interacts with RNA helicase RhpA, might be a member of a minimal RNA degradosome complex. Zn(2+) serves as cofactor. Acetylated on nine lysine residues. Some of the residues are acetylated by multiple different mechanisms. RimL is partially responsible for the acetylation of Lys-324, Lys-398 and Lys-650. HPB8_1270 homolog is partially responsible for the acetylation of Lys-324, Lys-398, Lys-512 and Lys-650. Acetyl-phosphate-mediated non-enzymatic acetylation pathway takes part in the acetylation of Lys-135, Lys-324, Lys-398, Lys-512 and Lys-650. Acetylation of the remaining residues Lys-141, Lys-338, Lys-548 and Lys-635 occurs by a yet undetermined mechanism. Acetylation on a number of these residues is important for growth regulation and proper cell morphology.

Its subcellular location is the cytoplasm. Its activity is regulated as follows. Catalytic activity is regulated by the balance between homodimers and homotetramers, with homotetramers being the active forms of this enzyme. Acetylation allosterically regulates the homooligomerization state and hence the catalytic activity. In terms of biological role, an RNase that has 5'-3' exoribonuclease and endoribonuclease activity. Degrades 5'-monophosphorylated ssRNA and dsRNA, considerably more active on ssRNA. Association with RhpA significantly increases the dsRNase activity. Degrades RNA substrate with hairpin structures at both ends with low activity, but presence of RhpA significantly increases the activity on this substrate. Stimulates ATPase activity of RNA helicase RhpA. Involved in stabilization of mRNA but apparently not rRNA. This chain is Ribonuclease J, found in Helicobacter pylori (strain J99 / ATCC 700824) (Campylobacter pylori J99).